Here is a 265-residue protein sequence, read N- to C-terminus: Polyglutamine-binding protein 1 (265 aa).

The region spanning 46-80 (EGLPPSWYKVFDPSCGLPYYWNADTDLVSWLSPHD) is the WW domain. Serine 94 carries the post-translational modification Phosphoserine. Residues 94–265 (SSNADAEEKL…AEASRTKQQD (172 aa)) form a disordered region. Basic and acidic residues predominate over residues 99–175 (AEEKLDRSHD…DKADREEGKE (77 aa)). 15 repeat units span residues 104–110 (DRSHDKS), 111–117 (DRGHDKS), 118–124 (DRSHEKL), 125–131 (DRGHDKS), 132–138 (DRGHDKS), 139–140 (DR), 141–142 (DR), 143–144 (ER), 150–151 (DR), 152–153 (ER), 154–155 (ER), 156–157 (DR), 158–159 (ER), 160–161 (DR), and 162–163 (DR). The segment at 104-138 (DRSHDKSDRGHDKSDRSHEKLDRGHDKSDRGHDKS) is 5 X 7 AA approximate tandem repeats of D-R-[SG]-H-D-K-S. A 3 X 2 AA tandem repeats of [DE]-R region spans residues 139–144 (DRDRER). A 7 X 2 AA tandem repeats of [DE]-R region spans residues 150-163 (DRERERDRERDRDR). The segment at 245–255 (YPSPGAVLRAN) is important for interaction with TXNL4A. Position 247 is a phosphoserine (serine 247).

In terms of assembly, interacts with POU3F2/Brn-2, ATXN1, TXNL4A, HTT and AR. Interaction with ATXN1 correlates positively with the length of the polyglutamine tract. Interacts with RNA polymerase II large subunit in a phosphorylation-dependent manner. Forms a ternary complex with ATXN1 mutant and phosphorylated RNA polymerase II. Interacts (via C-terminus) with TXNL4A and CD2BP2. Interacts (via WW domain) with ATN1 and SF3B1, and may interact with additional splice factors. Interacts (via WW domain) with WBP11; Leading to reduce interaction between PQBP1 and TXNL4A. Interacts with CAPRIN1. Interacts with DDX1. Interacts with SFPQ. Interacts with KHSRP.

It localises to the nucleus. Its subcellular location is the nucleus speckle. It is found in the cytoplasmic granule. In terms of biological role, intrinsically disordered protein that acts as a scaffold, and which is involved in different processes, such as pre-mRNA splicing, transcription regulation, innate immunity and neuron development. Interacts with splicing-related factors via the intrinsically disordered region and regulates alternative splicing of target pre-mRNA species. May suppress the ability of POU3F2 to transactivate the DRD1 gene in a POU3F2 dependent manner. Can activate transcription directly or via association with the transcription machinery. May be involved in ATXN1 mutant-induced cell death. The interaction with ATXN1 mutant reduces levels of phosphorylated RNA polymerase II large subunit. Involved in the assembly of cytoplasmic stress granule, possibly by participating in the transport of neuronal RNA granules. Also acts as an innate immune sensor of infection by retroviruses, by detecting the presence of reverse-transcribed DNA in the cytosol. Directly binds retroviral reverse-transcribed DNA in the cytosol and interacts with CGAS, leading to activate the cGAS-STING signaling pathway, triggering type-I interferon production. This is Polyglutamine-binding protein 1 (PQBP1) from Gorilla gorilla gorilla (Western lowland gorilla).